We begin with the raw amino-acid sequence, 406 residues long: Olfactomedin-like protein 3 (406 aa).

A signal peptide spans M1–G21. The stretch at H25–N101 forms a coiled coil. The 268-residue stretch at D134 to K401 folds into the Olfactomedin-like domain. An intrachain disulfide couples C135 to C328. N177 and N248 each carry an N-linked (GlcNAc...) asparagine glycan.

This sequence belongs to the OLFML3 family.

The protein resides in the secreted. In terms of biological role, secreted scaffold protein that plays an essential role in dorsoventral patterning during early development. Stabilizes axial formation by restricting chordin (CHRD) activity on the dorsal side. Acts by facilitating the association between the tolloid proteases and their substrate chordin (CHRD), leading to enhance chordin (CHRD) degradation. May have matrix-related function involved in placental and embryonic development, or play a similar role in other physiological processes. This is Olfactomedin-like protein 3 (Olfml3) from Mus musculus (Mouse).